The following is a 348-amino-acid chain: 4-hydroxyphenylpyruvate dioxygenase (348 aa).

2 consecutive VOC domains span residues 11–141 (GFAF…ITSS) and 151–303 (AIDH…IFTE). The Fe cation site is built by His154, His232, and Glu312.

Belongs to the 4HPPD family. Fe cation is required as a cofactor.

It catalyses the reaction 3-(4-hydroxyphenyl)pyruvate + O2 = homogentisate + CO2. Catalyzes the transformation of p-hydroxyphenylpyruvate into HGA. Has hemolytic and brown pigment production activity. In Legionella pneumophila (strain Corby), this protein is 4-hydroxyphenylpyruvate dioxygenase (lly).